A 149-amino-acid polypeptide reads, in one-letter code: 3-hydroxyacyl-[acyl-carrier-protein] dehydratase FabZ (149 aa).

The active site involves His-53.

It belongs to the thioester dehydratase family. FabZ subfamily.

The protein localises to the cytoplasm. It carries out the reaction a (3R)-hydroxyacyl-[ACP] = a (2E)-enoyl-[ACP] + H2O. Its function is as follows. Involved in unsaturated fatty acids biosynthesis. Catalyzes the dehydration of short chain beta-hydroxyacyl-ACPs and long chain saturated and unsaturated beta-hydroxyacyl-ACPs. This is 3-hydroxyacyl-[acyl-carrier-protein] dehydratase FabZ from Neisseria meningitidis serogroup B (strain ATCC BAA-335 / MC58).